Consider the following 107-residue polypeptide: Small ribosomal subunit protein uS10 (107 aa).

Belongs to the universal ribosomal protein uS10 family. As to quaternary structure, part of the 30S ribosomal subunit.

Functionally, involved in the binding of tRNA to the ribosomes. In Deinococcus deserti (strain DSM 17065 / CIP 109153 / LMG 22923 / VCD115), this protein is Small ribosomal subunit protein uS10.